A 67-amino-acid polypeptide reads, in one-letter code: Small ribosomal subunit protein eS17 (67 aa).

This sequence belongs to the eukaryotic ribosomal protein eS17 family.

This chain is Small ribosomal subunit protein eS17, found in Thermococcus sibiricus (strain DSM 12597 / MM 739).